The following is a 151-amino-acid chain: Putative pre-16S rRNA nuclease (151 aa).

The protein belongs to the YqgF nuclease family.

It is found in the cytoplasm. In terms of biological role, could be a nuclease involved in processing of the 5'-end of pre-16S rRNA. The polypeptide is Putative pre-16S rRNA nuclease (Aster yellows witches'-broom phytoplasma (strain AYWB)).